Here is a 561-residue protein sequence, read N- to C-terminus: Oxygen-dependent choline dehydrogenase (561 aa).

An FAD-binding site is contributed by 6 to 35 (DYIIIGAGSAGNVLATRLTEDADVSVLLLE). His-475 (proton acceptor) is an active-site residue.

This sequence belongs to the GMC oxidoreductase family. It depends on FAD as a cofactor.

The enzyme catalyses choline + A = betaine aldehyde + AH2. The catalysed reaction is betaine aldehyde + NAD(+) + H2O = glycine betaine + NADH + 2 H(+). Its pathway is amine and polyamine biosynthesis; betaine biosynthesis via choline pathway; betaine aldehyde from choline (cytochrome c reductase route): step 1/1. Its function is as follows. Involved in the biosynthesis of the osmoprotectant glycine betaine. Catalyzes the oxidation of choline to betaine aldehyde and betaine aldehyde to glycine betaine at the same rate. The sequence is that of Oxygen-dependent choline dehydrogenase from Pseudomonas aeruginosa (strain LESB58).